The sequence spans 285 residues: Golgi phosphoprotein 3-like (285 aa).

Residues 1–39 (MTTLTHRARRTEVGKNSEKKVESEENVNQDRNQDNEDIG) form a disordered region. The span at 10–23 (RTEVGKNSEKKVES) shows a compositional bias: basic and acidic residues. A 1,2-diacyl-sn-glycero-3-phospho-(1D-myo-inositol 4-phosphate)-binding residues include W67 and R76. S112 carries the phosphoserine modification. A 1,2-diacyl-sn-glycero-3-phospho-(1D-myo-inositol 4-phosphate) is bound by residues R157 and R160. The tract at residues 176–187 (EKQNFLLFDMTT) is beta-hairpin required for oligomerization.

It belongs to the GOLPH3/VPS74 family. As to quaternary structure, homooligomer. Does not interact MYO18; differs from GOLPH3 by its inability to interact with MYO18. May interact with ARF1.

It localises to the golgi apparatus. The protein localises to the golgi stack membrane. The protein resides in the trans-Golgi network membrane. Its function is as follows. Phosphatidylinositol-4-phosphate-binding protein that may antagonize the action of GOLPH3 which is required for the process of vesicle budding at the Golgi and anterograde transport to the plasma membrane. The protein is Golgi phosphoprotein 3-like (GOLPH3L) of Bos taurus (Bovine).